Here is a 1380-residue protein sequence, read N- to C-terminus: Mitogen-activated protein kinase kinase kinase 5 (1380 aa).

The segment at 30–97 (CRRGGGAATA…GNSGSGGGRR (68 aa)) is disordered. The segment covering 37–49 (ATAAEGEPSLQPL) has biased composition (low complexity). Residues 50 to 59 (LVPPPPPPPG) show a composition bias toward pro residues. 2 positions are modified to asymmetric dimethylarginine: Arg-85 and Arg-87. Ser-90 bears the Phosphoserine; by PIM1 and PKB/AKT1 mark. The tract at residues 649–1374 (HCKRFFEMVN…MLCTLWKAII (726 aa)) is interaction with PPIA/CYPA. One can recognise a Protein kinase domain in the interval 687 to 945 (NGDRVVLGKG…ANDLLIDEFL (259 aa)). Residues 693–701 (LGKGTYGIV) and Lys-716 contribute to the ATP site. At Tyr-725 the chain carries Phosphotyrosine. Residue Asp-810 is the Proton acceptor of the active site. Phosphothreonine; by autocatalysis is present on Thr-820. At Thr-845 the chain carries Phosphothreonine; by autocatalysis, MELK and MAP3K6. A Phosphothreonine; by autocatalysis modification is found at Thr-849. Ser-965 carries the phosphoserine modification. Ser-973 carries the post-translational modification Phosphoserine; by autocatalysis. 2 positions are modified to phosphoserine: Ser-1036 and Ser-1040. Residues 1188 to 1215 (ASESDTADPEDLDVEDEHEELSSNQTVR) are disordered. A compositionally biased stretch (acidic residues) spans 1192 to 1206 (DTADPEDLDVEDEHE). Residues 1252-1292 (LGRMKIETNRLLEELVRKERELQALLHQAIEEKDQEIRHLK) are a coiled coil.

The protein belongs to the protein kinase superfamily. STE Ser/Thr protein kinase family. MAP kinase kinase kinase subfamily. As to quaternary structure, homodimer when inactive. Binds both upstream activators and downstream substrates in multimolecular complexes. Part of a cytoplasmic complex made of HIPK1, DAB2IP and MAP3K5 in response to TNF. This complex formation promotes MAP3K5-JNK activation and subsequent apoptosis. Interacts with SOCS1 which recognizes phosphorylation of Tyr-725 and induces MAP3K5/ASK1 degradation in endothelial cells. Interacts with the 14-3-3 family proteins such as YWHAB, YWHAE, YWHAQ, YWHAH, YWHAZ and SFN. Interacts with ARRB2, BIRC2, DAB2IP, IGF1R, MAP3K6/ASK2, PIM1, PGAM5, SOCS1, STUB1, TRAF2 and TXN. Interacts with ERN1 in a TRAF2-dependent manner. Interacts with calcineurin subunit PPP3R1, PPP5C, PPM1L and TRAF6. Interacts (via N-terminus) with RAF1 and this interaction inhibits the proapoptotic function of MAP3K5. Interacts with DAB2IP (via N-terminus C2 domain); the interaction occurs in a TNF-alpha-dependent manner. Interacts with DUSP13A; may positively regulate apoptosis. Interacts with PPIA/CYPA. Interacts with PRMT1; the interaction results in MAP3K5 methylation by PRMT1 which inhibits MAP3K5 activation. Interacts with TRAF2; the interaction is inhibited by PRMT1. Interacts with TRIM48. It depends on Mg(2+) as a cofactor. In terms of processing, ser-90 and Ser-1040 are inactivating phosphorylation sites, the former of which is phosphorylated by AKT1. Phosphorylated at Ser-973 which induces association of MAP3K5/ASK1 with the 14-3-3 family proteins and suppresses MAP3K5/ASK1 activity. Calcineurin (CN) dephosphorylates this site. Also dephosphorylated and activated by PGAM5. Phosphorylated at Thr-845 through autophosphorylation and by MAP3K6/ASK2 which leads to activation. Thr-845 is dephosphorylated by PPP5C. Phosphorylation at Ser-973 in response to oxidative stress is negatively regulated by PPIA/CYPA. Ubiquitinated. Tumor necrosis factor (TNF) induces TNFR2-dependent ubiquitination, leading to proteasomal degradation. Ubiquitinated by RC3H2 in a TRIM48-dependent manner. Post-translationally, methylation at Arg-85 and Arg-87 by PRMT1 promotes association of MAP3K5 with thioredoxin and negatively regulates MAP3K5 association with TRAF2, inhibiting MAP3K5 activation. Methylation is blocked by ubiquitination of PRMT1 by TRIM48. Expressed in various adult mouse tissues including heart, brain, lung, liver and kidney.

It localises to the cytoplasm. The protein localises to the endoplasmic reticulum. The catalysed reaction is L-seryl-[protein] + ATP = O-phospho-L-seryl-[protein] + ADP + H(+). The enzyme catalyses L-threonyl-[protein] + ATP = O-phospho-L-threonyl-[protein] + ADP + H(+). Its activity is regulated as follows. Activated by various stressors, including oxidative stress, endoplasmic reticulum stress, and calcium overload, as well as by receptor-mediated inflammatory signals, such as the tumor necrosis factor (TNF) and lipopolysaccharide (LPS). Homophilic association of MAP3K5/ASK1 through the C-terminal coiled-coil domains and the heteromeric complex formation of MAP3K5/ASK1 with the reduced form of thioredoxin (TXN), constitutes an inactive form of the kinase. Upon ROS-induced dissociation of TXN from MAP3K5/ASK1, TRAF2 and TRAF6 are reciprocally recruited to MAP3K5/ASK1 and form the active MAP3K5/ASK1 signalosome, in which TRAF2 and TRAF6 appear to facilitate the active configuration of MAP3K5/ASK1. MAP3K5/ASK1 activity is also regulated through several phosphorylation and dephosphorylation events. Thr-845 is an activating phosphorylation site that is autophosphorylated and phosphorylated by MAP3K6/ASK2 and dephosphorylated by PPP5C. Ser-90 and Ser-1040 are inactivating phosphorylation sites, the former of which is phosphorylated by AKT1. Phosphorylation of Ser-973 induces association of MAP3K5/ASK1 with the 14-3-3 family proteins, which suppresses MAP3K5/ASK1 activity. Calcium/calmodulin-activated protein phosphatase calcineurin (PPP3CA) has been shown to directly dephosphorylate this site. SOCS1 binds to ASK1 by recognizing phosphorylation of Tyr-725 and induces MAP3K5/ASK1 degradation in endothelial cells. Also dephosphorylated and activated by PGAM5. Contains an N-terminal autoinhibitory domain. Serine/threonine kinase which acts as an essential component of the MAP kinase signal transduction pathway. Plays an important role in the cascades of cellular responses evoked by changes in the environment. Mediates signaling for determination of cell fate such as differentiation and survival. Plays a crucial role in the apoptosis signal transduction pathway through mitochondria-dependent caspase activation. MAP3K5/ASK1 is required for the innate immune response, which is essential for host defense against a wide range of pathogens. Mediates signal transduction of various stressors like oxidative stress as well as by receptor-mediated inflammatory signals, such as the tumor necrosis factor (TNF) or lipopolysaccharide (LPS). Once activated, acts as an upstream activator of the MKK/JNK signal transduction cascade and the p38 MAPK signal transduction cascade through the phosphorylation and activation of several MAP kinase kinases like MAP2K4/SEK1, MAP2K3/MKK3, MAP2K6/MKK6 and MAP2K7/MKK7. These MAP2Ks in turn activate p38 MAPKs and c-jun N-terminal kinases (JNKs). Both p38 MAPK and JNKs control the transcription factors activator protein-1 (AP-1). The sequence is that of Mitogen-activated protein kinase kinase kinase 5 (Map3k5) from Mus musculus (Mouse).